Reading from the N-terminus, the 439-residue chain is Tol-Pal system protein TolB (439 aa).

The N-terminal stretch at 1-22 is a signal peptide; that stretch reads MTKFPRWLAMLVGLLFPLSALT.

It belongs to the TolB family. The Tol-Pal system is composed of five core proteins: the inner membrane proteins TolA, TolQ and TolR, the periplasmic protein TolB and the outer membrane protein Pal. They form a network linking the inner and outer membranes and the peptidoglycan layer.

Its subcellular location is the periplasm. Functionally, part of the Tol-Pal system, which plays a role in outer membrane invagination during cell division and is important for maintaining outer membrane integrity. The protein is Tol-Pal system protein TolB of Xylella fastidiosa (strain 9a5c).